The chain runs to 193 residues: Probable gluconokinase (193 aa).

18–25 contributes to the ATP binding site; sequence GTAGTGKS.

Belongs to the gluconokinase GntK/GntV family.

The protein localises to the cytoplasm. The catalysed reaction is D-gluconate + ATP = 6-phospho-D-gluconate + ADP + H(+). Its pathway is carbohydrate acid metabolism; D-gluconate degradation. This is Probable gluconokinase from Saccharomyces cerevisiae (strain ATCC 204508 / S288c) (Baker's yeast).